A 562-amino-acid chain; its full sequence is MFS-type transporter calB (562 aa).

Polar residues predominate over residues 1 to 16; it reads MDEVTRTAQRSPSITE. Residues 1–45 form a disordered region; the sequence is MDEVTRTAQRSPSITETHAGETKLAGPGEKEGDVESPVDPSADSE. A helical transmembrane segment spans residues 57-77; that stretch reads FAILASVTLSAFLMLLDGSII. A glycan (N-linked (GlcNAc...) asparagine) is linked at N83. The next 13 helical transmembrane spans lie at 94–113, 123–143, 154–174, 184–204, 213–233, 256–276, 284–304, 329–349, 362–382, 389–409, 418–438, 451–471, and 530–550; these read IGWY…PLSG, WTYL…GVAN, VAGL…AGAV, GIYL…GGAL, CFYI…FLQV, LIGF…LYYG, SSQV…FALW, INGA…PIYF, VNTL…GVLV, LPFA…VTLF, WIGY…MGII, VGIA…VVVG, and VFYL…GMGW. An N-linked (GlcNAc...) asparagine glycan is attached at N557.

The protein belongs to the major facilitator superfamily. TCR/Tet family.

It localises to the cell membrane. Its function is as follows. MFS-type transporter; part of the gene cluster that mediates the biosynthesis of calbistrin A and related compounds. Calbistrin A is a secondary metabolite with an interesting structure that was recently found to have bioactivity against leukemia cells. It consists of two polyketides linked by an ester bond: a bicyclic decalin containing polyketide and a linear 12 carbon dioic acid structure. Required for the secretion of calbistrin A and calbistrin C, as well as of related compounds decumbenone A, B and C. In Penicillium decumbens, this protein is MFS-type transporter calB.